The chain runs to 121 residues: NLYQFGEMISKKTGTFGLFSYVYYGCYCGLGGKGKPLDATDRCCFVHDCCYGRVNGCNPKLSIYSYSFQNGDIVCGDEEDCLRDVCECDRVAAICFGENMNTYNKKYVLYSFKECNESDQC.

7 disulfide bridges follow: cysteine 26–cysteine 115, cysteine 28–cysteine 44, cysteine 43–cysteine 95, cysteine 49–cysteine 121, cysteine 50–cysteine 88, cysteine 57–cysteine 81, and cysteine 75–cysteine 86. Residues tyrosine 27, glycine 29, and glycine 31 each coordinate Ca(2+). Histidine 47 is a catalytic residue. Aspartate 48 contributes to the Ca(2+) binding site. Aspartate 89 is an active-site residue.

This sequence belongs to the phospholipase A2 family. Group II subfamily. D49 sub-subfamily. It depends on Ca(2+) as a cofactor. In terms of tissue distribution, expressed by the venom gland.

It localises to the secreted. It catalyses the reaction a 1,2-diacyl-sn-glycero-3-phosphocholine + H2O = a 1-acyl-sn-glycero-3-phosphocholine + a fatty acid + H(+). In terms of biological role, PLA2 catalyzes the calcium-dependent hydrolysis of the 2-acyl groups in 3-sn-phosphoglycerides. This is Acidic phospholipase A2 PLA-2 from Eristicophis macmahoni (Leaf-nosed viper).